Reading from the N-terminus, the 135-residue chain is MVLETISKIIKTQLPAYLKKFPLPETIGGFARLTVLDWLRLLPLLGILTLLGYLTIRPFLPKKKKQKDSLINLKIQKENPKVVNEIDIEDLKSTNVCYCRCWRSKTFPVCDKSHIKHNELTGDNVGPLILKKKII.

Residues 1-37 are Lumenal-facing; the sequence is MVLETISKIIKTQLPAYLKKFPLPETIGGFARLTVLD. Residues 38–60 traverse the membrane as a helical segment; the sequence is WLRLLPLLGILTLLGYLTIRPFL. Residues 61-135 lie on the Cytoplasmic side of the membrane; it reads PKKKKQKDSL…GPLILKKKII (75 aa). Positions 99, 101, 110, and 114 each coordinate [2Fe-2S] cluster.

This sequence belongs to the CISD protein family. CISD2 subfamily. In terms of assembly, homodimer. It depends on [2Fe-2S] cluster as a cofactor.

Its subcellular location is the endoplasmic reticulum membrane. The protein localises to the mitochondrion outer membrane. Regulator of autophagy that contributes to antagonize becn1-mediated cellular autophagy at the endoplasmic reticulum. Participates in the interaction of bcl2 with becn1 and is required for bcl2-mediated depression of endoplasmic reticulum Ca(2+) stores during autophagy. This chain is CDGSH iron-sulfur domain-containing protein 2B (cisd2b), found in Oncorhynchus mykiss (Rainbow trout).